We begin with the raw amino-acid sequence, 357 residues long: MALIPYALARPFLFSLDPETAHELTVRALALTQGTALQLAYGTSRVNDPITLAGLTFPNRVGLAAGLDKNARCIDGLGAMGFGFVEVGTVTPLAQPGNPRPRLFRLPQAQALINRFGFNNEGLASFMANVKNSTFYRQRQNPNLARKPLPLLLGLNIGKNAATPIERATEDYLTCLDGVYPYADYVAVNISSPNTRNLRSLQSDEALDSLLGAIAHRRQALVAQHGKQTPIFVKIAPDLDASQVDVIAASLRRHGMDGVIATNTTLSRDAVKGLAHADETGGLSGAPVLAMSNRVIGQLRAALGPGFPIIGVGGVMSADDAVSKIRAGADLVQIYTGLIYHGPKLVKQAAALIKTSC.

FMN contacts are provided by residues 65 to 69 and threonine 89; that span reads AGLDK. Lysine 69 provides a ligand contact to substrate. 114-118 provides a ligand contact to substrate; the sequence is NRFGF. FMN-binding residues include asparagine 156 and asparagine 189. Asparagine 189 contributes to the substrate binding site. Serine 192 functions as the Nucleophile in the catalytic mechanism. Asparagine 194 contributes to the substrate binding site. FMN contacts are provided by lysine 234 and threonine 262. Residue 263 to 264 coordinates substrate; the sequence is NT. FMN is bound by residues glycine 285, glycine 314, and 335–336; that span reads YT.

It belongs to the dihydroorotate dehydrogenase family. Type 2 subfamily. Monomer. It depends on FMN as a cofactor.

It is found in the cell membrane. The catalysed reaction is (S)-dihydroorotate + a quinone = orotate + a quinol. The protein operates within pyrimidine metabolism; UMP biosynthesis via de novo pathway; orotate from (S)-dihydroorotate (quinone route): step 1/1. In terms of biological role, catalyzes the conversion of dihydroorotate to orotate with quinone as electron acceptor. This is Dihydroorotate dehydrogenase (quinone) from Albidiferax ferrireducens (strain ATCC BAA-621 / DSM 15236 / T118) (Rhodoferax ferrireducens).